The primary structure comprises 487 residues: Probable cobyric acid synthase (487 aa).

The GATase cobBQ-type domain maps to 249–435 (DVDIAVVRFP…LHGIFNNASF (187 aa)). Catalysis depends on Cys328, which acts as the Nucleophile. His427 is an active-site residue.

This sequence belongs to the CobB/CobQ family. CobQ subfamily.

The protein operates within cofactor biosynthesis; adenosylcobalamin biosynthesis. In terms of biological role, catalyzes amidations at positions B, D, E, and G on adenosylcobyrinic A,C-diamide. NH(2) groups are provided by glutamine, and one molecule of ATP is hydrogenolyzed for each amidation. The protein is Probable cobyric acid synthase of Methanocella arvoryzae (strain DSM 22066 / NBRC 105507 / MRE50).